Here is a 178-residue protein sequence, read N- to C-terminus: MKILFDFLPIVIFFVVYKMTGNIIIATAILIPATIIQVGFTWFKNRTIEKMHLVSLALVVLLGGATVLLGDGDFIKWKPTIVNGLFAIAFLGSQFIGDKNIIQRMMGDKLDLPFKVWRTLNLAWVGFFIVSGVTNLYVAFSYSEEIWVDFKLFGLLGMTIVFIILQGIYLSSHLQNKE.

6 consecutive transmembrane segments (helical) span residues 1–21 (MKIL…KMTG), 23–43 (IIIA…FTWF), 51–71 (MHLV…LLGD), 77–97 (WKPT…QFIG), 120–140 (LNLA…YVAF), and 150–170 (FKLF…GIYL).

The protein belongs to the YciB family.

Its subcellular location is the cell inner membrane. Functionally, plays a role in cell envelope biogenesis, maintenance of cell envelope integrity and membrane homeostasis. In Marinomonas sp. (strain MWYL1), this protein is Inner membrane-spanning protein YciB.